Consider the following 673-residue polypeptide: UvrABC system protein B (673 aa).

Residues 26 to 414 form the Helicase ATP-binding domain; sequence ANFEAGLAKQ…AGEITELVVR (389 aa). Position 39–46 (39–46) interacts with ATP; the sequence is GVTGSGKT. A Beta-hairpin motif is present at residues 92 to 115; the sequence is YYDYYQPEAYVPSSDTFIEKDSSI. A Helicase C-terminal domain is found at 431–597; the sequence is QVDDLMSEVH…SVARPISDIM (167 aa). Residues 601–626 are disordered; that stretch reads REDAAEKKAGKGRSKSRQVAEEPADY. Positions 635 to 670 constitute a UVR domain; the sequence is AGKLKALEQKMYQHAKDLEFEAAAQIRDQILKLKAA.

It belongs to the UvrB family. In terms of assembly, forms a heterotetramer with UvrA during the search for lesions. Interacts with UvrC in an incision complex.

The protein resides in the cytoplasm. Its function is as follows. The UvrABC repair system catalyzes the recognition and processing of DNA lesions. A damage recognition complex composed of 2 UvrA and 2 UvrB subunits scans DNA for abnormalities. Upon binding of the UvrA(2)B(2) complex to a putative damaged site, the DNA wraps around one UvrB monomer. DNA wrap is dependent on ATP binding by UvrB and probably causes local melting of the DNA helix, facilitating insertion of UvrB beta-hairpin between the DNA strands. Then UvrB probes one DNA strand for the presence of a lesion. If a lesion is found the UvrA subunits dissociate and the UvrB-DNA preincision complex is formed. This complex is subsequently bound by UvrC and the second UvrB is released. If no lesion is found, the DNA wraps around the other UvrB subunit that will check the other stand for damage. The chain is UvrABC system protein B from Xanthomonas campestris pv. campestris (strain 8004).